The sequence spans 161 residues: Ribosome maturation factor RimP (161 aa).

It belongs to the RimP family.

The protein localises to the cytoplasm. In terms of biological role, required for maturation of 30S ribosomal subunits. This Herminiimonas arsenicoxydans protein is Ribosome maturation factor RimP.